A 147-amino-acid polypeptide reads, in one-letter code: Endoribonuclease YbeY (147 aa).

3 residues coordinate Zn(2+): His109, His113, and His119.

The protein belongs to the endoribonuclease YbeY family. The cofactor is Zn(2+).

Its subcellular location is the cytoplasm. Its function is as follows. Single strand-specific metallo-endoribonuclease involved in late-stage 70S ribosome quality control and in maturation of the 3' terminus of the 16S rRNA. The polypeptide is Endoribonuclease YbeY (Thiobacillus denitrificans (strain ATCC 25259 / T1)).